Reading from the N-terminus, the 115-residue chain is NADH-ubiquinone oxidoreductase chain 3 (115 aa).

3 helical membrane-spanning segments follow: residues 5–25, 55–75, and 86–106; these read LTLMTDVALALLLVMIAFWLP, FFLVAITFLLFDLEIALLLPL, and LMLTMALLLISILAAGLAYEW.

It belongs to the complex I subunit 3 family. As to quaternary structure, core subunit of respiratory chain NADH dehydrogenase (Complex I) which is composed of 45 different subunits. Interacts with TMEM186. Interacts with TMEM242.

It is found in the mitochondrion inner membrane. It carries out the reaction a ubiquinone + NADH + 5 H(+)(in) = a ubiquinol + NAD(+) + 4 H(+)(out). In terms of biological role, core subunit of the mitochondrial membrane respiratory chain NADH dehydrogenase (Complex I) which catalyzes electron transfer from NADH through the respiratory chain, using ubiquinone as an electron acceptor. Essential for the catalytic activity of complex I. The chain is NADH-ubiquinone oxidoreductase chain 3 from Avahi cleesei (Cleese's woolly lemur).